The following is a 2997-amino-acid chain: MADPGMMSLFGEDGNIFSEGLEGLGECGYPENPVNPMGQQMPIDQGFASLQPSLHHPSTNQNQTKLTHFDHYNQYEQQKMHLMDQPNRMMSNTPGNGLASPHSQYHTPPVPQVPHGGSGGGQMGVYPGMQNERHGQSFVDSSSMWGPRAVQVPDQIRAPYQQQQPQPQPPQPAPSGPPAQGHPQHMQQMGSYMARGDFSMQQHGQPQQRMSQFSQGQEGLNQGNPFIATSGPGHLSHVPQQSPSMAPSLRHSVQQFHHHPSTALHGESVAHSPRFSPNPPQQGAVRPQTLNFSSRSQTVPSPTINNSGQYSRYPYSNLNQGLVNNTGMNQNLGLTNNTPMNQSVPRYPNAVGFPSNSGQGLMHQQPIHPSGSLNQMNTQTMHPSQPQGTYASPPPMSPMKAMSNPAGTPPPQVRPGSAGIPMEVGSYPNMPHPQPSHQPPGAMGIGQRNMGPRNMQQSRPFIGMSSAPRELTGHMRPNGCPGVGLGDPQAIQERLIPGQQHPGQQPSFQQLPTCPPLQPHPGLHHQSSPPHPHHQPWAQLHPSPQNTPQKVPVHQHSPSEPFLEKPVPDMTQVSGPNAQLVKSDDYLPSIEQQPQQKKKKKKNNHIVAEDPSKGFGKDDFPGGVDNQELNRNSLDGSQEEKKKKKRSKAKKDPKEPKEPKEKKEPKEPKTPKAPKIPKEPKEKKAKTATPKPKSSKKSSNKKPDSEASALKKKVNKGKTEGSENSDLDKTPPPSPPPEEDEDPGVQKRRSSRQVKRKRYTEDLEFKISDEEADDADAAGRDSPSNTSQSEQQESVDAEGPVVEKIMSSRSVKKQKESGEEVEIEEFYVKYKNFSYLHCQWASIEDLEKDKRIQQKIKRFKAKQGQNKFLSEIEDELFNPDYVEVDRIMDFARSTDDRGEPVTHYLVKWCSLPYEDSTWERRQDIDQAKIEEFEKLMSREPETERVERPPADDWKKSESSREYKNNNKLREYQLEGVNWLLFNWYNMRNCILADEMGLGKTIQSITFLYEIYLKGIHGPFLVIAPLSTIPNWEREFRTWTELNVVVYHGSQASRRTIQLYEMYFKDPQGRVIKGSYKFHAIITTFEMILTDCPELRNIPWRCVVIDEAHRLKNRNCKLLEGLKMMDLEHKVLLTGTPLQNTVEELFSLLHFLEPSRFPSETTFMQEFGDLKTEEQVQKLQAILKPMMLRRLKEDVEKNLAPKEETIIEVELTNIQKKYYRAILEKNFTFLSKGGGQANVPNLLNTMMELRKCCNHPYLINGAEEKILEEFKETHNAESPDFQLQAMIQAAGKLVLIDKLLPKLKAGGHRVLIFSQMVRCLDILEDYLIQRRYPYERIDGRVRGNLRQAAIDRFSKPDSDRFVFLLCTRAGGLGINLTAADTCIIFDSDWNPQNDLQAQARCHRIGQSKSVKIYRLITRNSYEREMFDKASLKLGLDKAVLQSMSGRENATNGVQQLSKKEIEDLLRKGAYGALMDEEDEGSKFCEEDIDQILLRRTHTITIESEGKGSTFAKASFVASGNRTDISLDDPNFWQKWAKKAELDIDALNGRNNLVIDTPRVRKQTRLYSAVKEDELMEFSDLESDSEEKPCAKPRRPQDKSQGYARSECFRVEKNLLVYGWGRWTDILSHGRYKRQLTEQDVETICRTILVYCLNHYKGDENIKSFIWDLITPTADGQTRALVNHSGLSAPVPRGRKGKKVKAQSTQPVVQDADWLASCNPDALFQEDSYKKHLKHHCNKVLLRVRMLYYLRQEVIGDQADKILEGADSSEADVWIPEPFHAEVPADWWDKEADKSLLIGVFKHGYEKYNSMRADPALCFLERVGMPDAKAIAAEQRGTDMLADGGDGGEFDREDEDPEYKPTRTPFKDEIDEFANSPSEDKEESMEIHATGKHSESNAELGQLYWPNTSTLTTRLRRLITAYQRSYKRQQMRQEALMKTDRRRRRPREEVRALEAEREAIISEKRQKWTRREEADFYRVVSTFGVIFDPVKQQFDWNQFRAFARLDKKSDESLEKYFSCFVAMCRRVCRMPVKPDDEPPDLSSIIEPITEERASRTLYRIELLRKIREQVLHHPQLGERLKLCQPSLDLPEWWECGRHDRDLLVGAAKHGVSRTDYHILNDPELSFLDAHKNFAQNRGAGNTSSLNPLAVGFVQTPPVISSAHIQDERVLEQAEGKVEEPENPAAKEKCEGKEEEEETDGSGKESKQECEAEASSVKNELKGVEVGADTGSKSISEKGSEEDEEEKLEDDDKSEESSQPEAGAVSRGKNFDEESNASMSTARDETRDGFYMEDGDPSVAQLLHERTFAFSFWPKDRVMINRLDNICEAVLKGKWPVNRRQMFDFQGLIPGYTPTTVDSPLQKRSFAELSMVGQASISGSEDITTSPQLSKEDALNLSVPRQRRRRRRKIEIEAERAAKRRNLMEMVAQLRESQVVSENGQEKVVDLSKASREATSSTSNFSSLSSKFILPNVSTPVSDAFKTQMELLQAGLSRTPTRHLLNGSLVDGEPPMKRRRGRRKNVEGLDLLFMSHKRTSLSAEDAEVTKAFEEDIETPPTRNIPSPGQLDPDTRIPVINLEDGTRLVGEDAPKNKDLVEWLKLHPTYTVDMPSYVPKNADVLFSSFQKPKQKRHRCRNPNKLDINTLTGEERVPVVNKRNGKKMGGAMAPPMKDLPRWLEENPEFAVAPDWTDIVKQSGFVPESMFDRLLTGPVVRGEGASRRGRRPKSEIARAAAAAAAVASTSGINPLLVNSLFAGMDLTSLQNLQNLQSLQLAGLMGFPPGLATAATAGGDAKNPAAVLPLMLPGMAGLPNVFGLGGLLNNPLSAATGNTTTASSQGEPEDSTSKGEEKGNENEDENKDSEKSTDAVSAADSANGSVGAATAPAGLPSNPLAFNPFLLSTMAPGLFYPSMFLPPGLGGLTLPGFPALAGLQNAVGSSEEKAADKAEGGPFKDGETLEGSDAEESLDKTAESSLLEDEIAQGEELDSLDGGDEIENNENDE.

The tract at residues 86 to 144 is disordered; that stretch reads PNRMMSNTPGNGLASPHSQYHTPPVPQVPHGGSGGGQMGVYPGMQNERHGQSFVDSSSM. The span at 88-106 shows a compositional bias: polar residues; sequence RMMSNTPGNGLASPHSQYH. Arg148 carries the post-translational modification Omega-N-methylarginine. 5 disordered regions span residues 160 to 186, 199 to 287, 375 to 419, 498 to 816, and 938 to 959; these read YQQQQPQPQPPQPAPSGPPAQGHPQHM, SMQQ…AVRP, QMNT…GSAG, GQQH…KQKE, and REPETERVERPPADDWKKSESS. Residues 166–177 show a composition bias toward pro residues; the sequence is QPQPPQPAPSGP. Polar residues-rich tracts occupy residues 199–224 and 238–255; these read SMQQHGQPQQRMSQFSQGQEGLNQGN and VPQQSPSMAPSLRHSVQQ. Arg286 is subject to Asymmetric dimethylarginine. Over residues 375 to 390 the composition is skewed to polar residues; the sequence is QMNTQTMHPSQPQGTY. Residues 498 to 510 show a composition bias toward low complexity; it reads GQQHPGQQPSFQQ. The span at 607–620 shows a compositional bias: basic and acidic residues; it reads VAEDPSKGFGKDDF. Over residues 627–636 the composition is skewed to polar residues; that stretch reads QELNRNSLDG. Ser637 carries the phosphoserine modification. Basic and acidic residues-rich tracts occupy residues 650–682 and 717–729; these read KKDPKEPKEPKEKKEPKEPKTPKAPKIPKEPKE and GKTEGSENSDLDK. At Ser725 the chain carries Phosphoserine. A compositionally biased stretch (basic residues) spans 746–758; sequence QKRRSSRQVKRKR. Residues 759 to 769 show a composition bias toward basic and acidic residues; the sequence is YTEDLEFKISD. A compositionally biased stretch (polar residues) spans 782-794; sequence SPSNTSQSEQQES. Chromo domains lie at 800-867 and 882-947; these read PVVE…GQNK and VEVD…RVER. The Helicase ATP-binding domain occupies 980 to 1154; sequence LFNWYNMRNC…FSLLHFLEPS (175 aa). 993 to 1000 provides a ligand contact to ATP; the sequence is DEMGLGKT. The short motif at 1105–1108 is the DEAH box element; it reads DEAH. In terms of domain architecture, Helicase C-terminal spans 1294–1464; the sequence is LIDKLLPKLK…LSKKEIEDLL (171 aa). Disordered regions lie at residues 1576–1600 and 1837–1863; these read FSDLESDSEEKPCAKPRRPQDKSQG and DMLADGGDGGEFDREDEDPEYKPTRTP. A phosphoserine mark is found at Ser1577 and Ser1581. Positions 1584 to 1596 are enriched in basic and acidic residues; the sequence is EEKPCAKPRRPQD. Positions 1844–1855 are enriched in acidic residues; sequence DGGEFDREDEDP. At Ser1874 the chain carries Phosphoserine. 2 stretches are compositionally biased toward basic and acidic residues: residues 2170–2189 and 2198–2207; these read QAEGKVEEPENPAAKEKCEG and GSGKESKQEC. The tract at residues 2170 to 2290 is disordered; it reads QAEGKVEEPE…DETRDGFYME (121 aa). Phosphoserine is present on residues Ser2231, Ser2233, Ser2237, Ser2251, Ser2272, Ser2275, Ser2356, and Ser2395. Acidic residues predominate over residues 2237-2251; sequence SEEDEEEKLEDDDKS. Residues 2401–2431 are a coiled coil; sequence RRRRRKIEIEAERAAKRRNLMEMVAQLRESQ. Thr2472 bears the Phosphothreonine mark. Phosphoserine occurs at positions 2533 and 2535. Position 2551 is a phosphothreonine (Thr2551). Phosphoserine occurs at positions 2559 and 2619. Residues 2823–2832 show a composition bias toward low complexity; that stretch reads ATGNTTTASS. 2 disordered regions span residues 2823 to 2872 and 2935 to 2997; these read ATGN…SANG and EEKA…ENDE. Basic and acidic residues-rich tracts occupy residues 2839–2849 and 2935–2951; these read STSKGEEKGNE and EEKAADKAEGGPFKDGE. Phosphoserine occurs at positions 2956 and 2961. Over residues 2970–2997 the composition is skewed to acidic residues; that stretch reads LLEDEIAQGEELDSLDGGDEIENNENDE.

It belongs to the SNF2/RAD54 helicase family. As to quaternary structure, may interact with CTCF. Interacts with CHD8. Interacts with FAM124B. Found in a complex composed of AGO2, CHD7 and ARB2A. Interacts with TLK2. In terms of tissue distribution, widely expressed in fetal and adult tissues.

It localises to the nucleus. It is found in the nucleolus. It catalyses the reaction ATP + H2O = ADP + phosphate + H(+). In terms of biological role, ATP-dependent chromatin-remodeling factor, slides nucleosomes along DNA; nucleosome sliding requires ATP. Probable transcription regulator. May be involved in the in 45S precursor rRNA production. The protein is Chromodomain-helicase-DNA-binding protein 7 (CHD7) of Homo sapiens (Human).